The sequence spans 122 residues: Large ribosomal subunit protein uL14 (122 aa).

Belongs to the universal ribosomal protein uL14 family. As to quaternary structure, part of the 50S ribosomal subunit. Forms a cluster with proteins L3 and L19. In the 70S ribosome, L14 and L19 interact and together make contacts with the 16S rRNA in bridges B5 and B8.

Binds to 23S rRNA. Forms part of two intersubunit bridges in the 70S ribosome. The protein is Large ribosomal subunit protein uL14 of Orientia tsutsugamushi (strain Ikeda) (Rickettsia tsutsugamushi).